We begin with the raw amino-acid sequence, 175 residues long: Nucleoside diphosphate kinase 6 (175 aa).

ATP-binding residues include Lys15, Phe63, Arg91, Thr97, Arg111, and Asn121. His124 (pros-phosphohistidine intermediate) is an active-site residue.

Belongs to the NDK family. Mg(2+) serves as cofactor.

The enzyme catalyses a 2'-deoxyribonucleoside 5'-diphosphate + ATP = a 2'-deoxyribonucleoside 5'-triphosphate + ADP. The catalysed reaction is a ribonucleoside 5'-diphosphate + ATP = a ribonucleoside 5'-triphosphate + ADP. Its function is as follows. Major role in the synthesis of nucleoside triphosphates other than ATP. The ATP gamma phosphate is transferred to the NDP beta phosphate via a ping-pong mechanism, using a phosphorylated active-site intermediate. The sequence is that of Nucleoside diphosphate kinase 6 (nme6) from Danio rerio (Zebrafish).